The following is a 215-amino-acid chain: Interleukin-12 subunit alpha (215 aa).

The N-terminal stretch at 1-22 (MCQSRYLLFLATLALLNHLSLA) is a signal peptide. 3 disulfides stabilise this stretch: Cys33-Cys106, Cys60-Cys192, and Cys81-Cys119. Residue Asn89 is glycosylated (N-linked (GlcNAc...) asparagine).

The protein belongs to the IL-6 superfamily. As to quaternary structure, heterodimer with IL12B; disulfide-linked. This heterodimer is known as interleukin IL-12. Heterodimer with EBI3/IL27B; not disulfide-linked. This heterodimer is known as interleukin IL-35. Interacts with NBR1; this interaction promotes IL-12 secretion.

It localises to the secreted. Its function is as follows. Heterodimerizes with IL12B to form the IL-12 cytokine or with EBI3/IL27B to form the IL-35 cytokine. IL-12 is primarily produced by professional antigen-presenting cells (APCs) such as B-cells and dendritic cells (DCs) as well as macrophages and granulocytes and regulates T-cell and natural killer-cell responses, induces the production of interferon-gamma (IFN-gamma), favors the differentiation of T-helper 1 (Th1) cells and is an important link between innate resistance and adaptive immunity. Mechanistically, exerts its biological effects through a receptor composed of IL12R1 and IL12R2 subunits. Binding to the receptor results in the rapid tyrosine phosphorylation of a number of cellular substrates including the JAK family kinases TYK2 and JAK2. In turn, recruited STAT4 gets phosphorylated and translocates to the nucleus where it regulates cytokine/growth factor responsive genes. As part of IL-35, plays essential roles in maintaining the immune homeostasis of the liver microenvironment and also functions as an immune-suppressive cytokine. Mediates biological events through unconventional receptors composed of IL12RB2 and gp130/IL6ST heterodimers or homodimers. Signaling requires the transcription factors STAT1 and STAT4, which form a unique heterodimer that binds to distinct DNA sites. The chain is Interleukin-12 subunit alpha (Il12a) from Mus musculus (Mouse).